The following is a 184-amino-acid chain: dCTP deaminase (184 aa).

DCTP is bound by residues 97-102 (RSTFAR) and aspartate 113. Glutamate 123 serves as the catalytic Proton donor/acceptor. DCTP-binding residues include tyrosine 155 and glutamine 162.

This sequence belongs to the dCTP deaminase family. In terms of assembly, homotrimer.

The catalysed reaction is dCTP + H2O + H(+) = dUTP + NH4(+). It functions in the pathway pyrimidine metabolism; dUMP biosynthesis; dUMP from dCTP (dUTP route): step 1/2. Catalyzes the deamination of dCTP to dUTP. This is dCTP deaminase from Saccharolobus solfataricus (strain ATCC 35092 / DSM 1617 / JCM 11322 / P2) (Sulfolobus solfataricus).